A 311-amino-acid chain; its full sequence is Probable cobalamin biosynthesis protein CobD (311 aa).

4 consecutive transmembrane segments (helical) span residues 53-73 (FIFGTLTTISVLFIVFGAIYG), 76-96 (ILINNIQNIYIKYIVYSFLIS), 157-177 (DSIIAPLFYAIFFGLEGAFIY), and 288-308 (FSIDVVIFSFIVLYSIYYVIF).

It belongs to the CobD/CbiB family.

The protein resides in the cell membrane. It functions in the pathway cofactor biosynthesis; adenosylcobalamin biosynthesis. Its function is as follows. Converts cobyric acid to cobinamide by the addition of aminopropanol on the F carboxylic group. The polypeptide is Probable cobalamin biosynthesis protein CobD (Methanococcus aeolicus (strain ATCC BAA-1280 / DSM 17508 / OCM 812 / Nankai-3)).